We begin with the raw amino-acid sequence, 622 residues long: Arginine--tRNA ligase (622 aa).

Residues 127–137 (ANPVHPLHVGH) carry the 'HIGH' region motif.

Belongs to the class-I aminoacyl-tRNA synthetase family.

It localises to the cytoplasm. It carries out the reaction tRNA(Arg) + L-arginine + ATP = L-arginyl-tRNA(Arg) + AMP + diphosphate. This Ignicoccus hospitalis (strain KIN4/I / DSM 18386 / JCM 14125) protein is Arginine--tRNA ligase.